We begin with the raw amino-acid sequence, 272 residues long: R3H domain-containing protein 4 (272 aa).

The segment at 141-167 (LEDEGKSKARRRGPTRGEDRRREDPAY) is disordered. The span at 155-165 (TRGEDRRREDP) shows a compositional bias: basic and acidic residues. In terms of domain architecture, R3H spans 191–254 (METLETWEER…KRQMKVSNRH (64 aa)).

Its subcellular location is the nucleus. This Bos taurus (Bovine) protein is R3H domain-containing protein 4 (R3HDM4).